A 247-amino-acid polypeptide reads, in one-letter code: UPF0273 protein PF1931 (247 aa).

In terms of domain architecture, KaiC spans 3-247 (RRVKTGIPGM…VLKRGRIYEL (245 aa)). 30–37 (GGPGTGKS) lines the ATP pocket.

Belongs to the UPF0273 family.

This is UPF0273 protein PF1931 from Pyrococcus furiosus (strain ATCC 43587 / DSM 3638 / JCM 8422 / Vc1).